The following is a 255-amino-acid chain: MSLAIRIIPCLDVCDGRVVKGTKFIDIKDAGDPVEVAKRYDLEGADEIIFLDITASIDGRDTMIHMVEAIAEQVFIPLTVGGGIRKAADVRAILNAGADKITINSAAIFNPNLINQLSKEFGSQCIVIAIDAKKIDYNKWGIFTHGGRKYTGIDAIEWAKKMTCGDNGAGEVLLTSMDCDGVKTGFDLLLTRAVSDAVDVPVIASGGVGNLEHLSEGVLQGAADAVLAASIFHFGEYTIQQAKKAMQENGIKVRL.

Catalysis depends on residues Asp12 and Asp131.

The protein belongs to the HisA/HisF family. In terms of assembly, heterodimer of HisH and HisF.

The protein localises to the cytoplasm. The enzyme catalyses 5-[(5-phospho-1-deoxy-D-ribulos-1-ylimino)methylamino]-1-(5-phospho-beta-D-ribosyl)imidazole-4-carboxamide + L-glutamine = D-erythro-1-(imidazol-4-yl)glycerol 3-phosphate + 5-amino-1-(5-phospho-beta-D-ribosyl)imidazole-4-carboxamide + L-glutamate + H(+). The protein operates within amino-acid biosynthesis; L-histidine biosynthesis; L-histidine from 5-phospho-alpha-D-ribose 1-diphosphate: step 5/9. IGPS catalyzes the conversion of PRFAR and glutamine to IGP, AICAR and glutamate. The HisF subunit catalyzes the cyclization activity that produces IGP and AICAR from PRFAR using the ammonia provided by the HisH subunit. The polypeptide is Imidazole glycerol phosphate synthase subunit HisF (Vesicomyosocius okutanii subsp. Calyptogena okutanii (strain HA)).